A 289-amino-acid chain; its full sequence is F-box protein PP2-A11 (289 aa).

Positions 23-69 (QPGLGDLPESCVALILQNLDPVEICRFSKLNTAFHGASWADFVWESK) constitute an F-box domain.

In terms of assembly, part of a SCF (ASK-cullin-F-box) protein ligase complex. Interacts with SKP1A/ASK1.

It localises to the nucleus. It functions in the pathway protein modification; protein ubiquitination. Component of SCF(ASK-cullin-F-box) E3 ubiquitin ligase complexes, which may mediate the ubiquitination and subsequent proteasomal degradation of target proteins. In Arabidopsis thaliana (Mouse-ear cress), this protein is F-box protein PP2-A11 (PP2A11).